Here is a 679-residue protein sequence, read N- to C-terminus: Enzymatic polyprotein (679 aa).

The interval 40–130 (LHCFVDTGAS…LYEPFIQFTD (91 aa)) is protease. Aspartate 45 is an active-site residue. In terms of domain architecture, Reverse transcriptase spans 272 to 452 (LKVIKPSKSP…KKINFLGLEI (181 aa)).

The protein belongs to the caulimoviridae enzymatic polyprotein family.

The enzyme catalyses DNA(n) + a 2'-deoxyribonucleoside 5'-triphosphate = DNA(n+1) + diphosphate. In terms of biological role, encodes for at least two polypeptides: protease (PR) and reverse transcriptase (RT). The protease processes the polyprotein in cis. Reverse transcriptase is multifunctional enzyme that converts the viral RNA genome into dsDNA in viral cytoplasmic capsids. This enzyme displays a DNA polymerase activity that can copy either DNA or RNA templates, and a ribonuclease H (RNase H) activity that cleaves the RNA strand of RNA-DNA heteroduplexes in a partially processive 3'- to 5'-endonucleasic mode. Neo-synthesized pregenomic RNA (pgRNA) are encapsidated, and reverse-transcribed inside the nucleocapsid. Partial (+)DNA is synthesized from the (-)DNA template and generates the relaxed circular DNA (RC-DNA) genome. After budding and infection, the RC-DNA migrates in the nucleus, and is converted into a plasmid-like covalently closed circular DNA (cccDNA). This is Enzymatic polyprotein from Arabidopsis thaliana (Mouse-ear cress).